The primary structure comprises 239 residues: 1-(5-phosphoribosyl)-5-[(5-phosphoribosylamino)methylideneamino] imidazole-4-carboxamide isomerase (239 aa).

Residue aspartate 8 is the Proton acceptor of the active site. Residue aspartate 129 is the Proton donor of the active site.

Belongs to the HisA/HisF family.

It is found in the cytoplasm. The catalysed reaction is 1-(5-phospho-beta-D-ribosyl)-5-[(5-phospho-beta-D-ribosylamino)methylideneamino]imidazole-4-carboxamide = 5-[(5-phospho-1-deoxy-D-ribulos-1-ylimino)methylamino]-1-(5-phospho-beta-D-ribosyl)imidazole-4-carboxamide. It participates in amino-acid biosynthesis; L-histidine biosynthesis; L-histidine from 5-phospho-alpha-D-ribose 1-diphosphate: step 4/9. The chain is 1-(5-phosphoribosyl)-5-[(5-phosphoribosylamino)methylideneamino] imidazole-4-carboxamide isomerase from Legionella pneumophila (strain Lens).